A 208-amino-acid polypeptide reads, in one-letter code: MAKVLYITAHPFNELVSNSMAAGKAFIETYQQQHPEDEVKHIDLFETYIPVIDKDVLTGWGKMSNGETLTDDEQMKVSRLSDILEEFLSADKYVLVTPMWNLSFPPVVKAYIDAISIAGKTFKYSAEGPQGLLTDKKVLHIQSRGGYYTEGPAADFEMGDRYLRTIMTFLGVPSYETIIIEGHNAEPHKTEEIKATSINNAEKLATTF.

Residues 17-19 (SNS), 99-102 (MWNL), and 143-146 (SRGG) each bind FMN.

The protein belongs to the azoreductase type 1 family. In terms of assembly, homodimer. FMN is required as a cofactor.

The catalysed reaction is 2 a quinone + NADH + H(+) = 2 a 1,4-benzosemiquinone + NAD(+). The enzyme catalyses N,N-dimethyl-1,4-phenylenediamine + anthranilate + 2 NAD(+) = 2-(4-dimethylaminophenyl)diazenylbenzoate + 2 NADH + 2 H(+). Its function is as follows. Quinone reductase that provides resistance to thiol-specific stress caused by electrophilic quinones. In terms of biological role, also exhibits azoreductase activity. Catalyzes the reductive cleavage of the azo bond in aromatic azo compounds to the corresponding amines. The sequence is that of FMN-dependent NADH:quinone oxidoreductase from Staphylococcus aureus (strain MRSA252).